Reading from the N-terminus, the 717-residue chain is HHIP-like protein 2 (717 aa).

Positions 1 to 40 (MLGKHTSPHTVPGHRAPWLSPGIFCLGLPFLLGWVGLLQG) are cleaved as a signal peptide. Cystine bridges form between cysteine 203-cysteine 545, cysteine 207-cysteine 551, cysteine 423-cysteine 441, and cysteine 508-cysteine 607. Residues 642-717 (ARKASNATFT…MRQAAGRSHP (76 aa)) are disordered. Residues 646–662 (SNATFTSSSDRVASQKG) are compositionally biased toward polar residues. N-linked (GlcNAc...) asparagine glycosylation occurs at asparagine 647. Residues 672 to 687 (SSKKTFRRPGTKKKSR) show a composition bias toward basic residues.

This sequence belongs to the HHIP family.

It is found in the secreted. This chain is HHIP-like protein 2 (Hhipl2), found in Mus musculus (Mouse).